Reading from the N-terminus, the 384-residue chain is Dihydrolipoyllysine-residue acetyltransferase component of pyruvate dehydrogenase complex (384 aa).

Residues 2 to 77 (ANEFKFTDVG…SIGQVMAVIG (76 aa)) form the Lipoyl-binding domain. Lys43 carries the N6-lipoyllysine modification. Residue His356 is part of the active site.

The protein belongs to the 2-oxoacid dehydrogenase family. In terms of assembly, forms a 24-polypeptide structural core with octahedral symmetry. The cofactor is (R)-lipoate.

The enzyme catalyses N(6)-[(R)-dihydrolipoyl]-L-lysyl-[protein] + acetyl-CoA = N(6)-[(R)-S(8)-acetyldihydrolipoyl]-L-lysyl-[protein] + CoA. Functionally, the pyruvate dehydrogenase complex catalyzes the overall conversion of pyruvate to acetyl-CoA and CO(2). It contains multiple copies of three enzymatic components: pyruvate dehydrogenase (E1), dihydrolipoamide acetyltransferase (E2) and lipoamide dehydrogenase (E3). This Mycoplasma genitalium (strain ATCC 33530 / DSM 19775 / NCTC 10195 / G37) (Mycoplasmoides genitalium) protein is Dihydrolipoyllysine-residue acetyltransferase component of pyruvate dehydrogenase complex (pdhC).